The primary structure comprises 266 residues: Glucosamine-6-phosphate deaminase (266 aa).

The active-site Proton acceptor; for enolization step is Asp-72. The active-site For ring-opening step is Asp-141. The active-site Proton acceptor; for ring-opening step is His-143. Glu-148 functions as the For ring-opening step in the catalytic mechanism.

This sequence belongs to the glucosamine/galactosamine-6-phosphate isomerase family. NagB subfamily. In terms of assembly, homohexamer.

It carries out the reaction alpha-D-glucosamine 6-phosphate + H2O = beta-D-fructose 6-phosphate + NH4(+). It functions in the pathway amino-sugar metabolism; N-acetylneuraminate degradation; D-fructose 6-phosphate from N-acetylneuraminate: step 5/5. Allosterically activated by N-acetylglucosamine 6-phosphate (GlcNAc6P). Its function is as follows. Catalyzes the reversible isomerization-deamination of glucosamine 6-phosphate (GlcN6P) to form fructose 6-phosphate (Fru6P) and ammonium ion. This is Glucosamine-6-phosphate deaminase from Yersinia pestis bv. Antiqua (strain Antiqua).